The primary structure comprises 248 residues: MAGHSQFKNIMHRKGRQDAVRSKMFSKLAREITVAAKAGLPDPAMNPRLRLAIQNAKAQSMPKDNIERAVKKAAGGDAETYEEVRYEGYGPAGVAVIVEALTDNRNRTASNVRSIFTKAGGALGETGSVSFSFDRVGEITYKLSVGDADTVMEAAIEAGADDVETDEEGHTITCGFEDIGEVSKALEGALGEAETVKAVWKPQNTVPVDEEKAQSLMKLIDNLEDDDDVQNVYSNFEVSEEVLAKLSA.

The protein belongs to the TACO1 family.

It localises to the cytoplasm. This Sinorhizobium medicae (strain WSM419) (Ensifer medicae) protein is Probable transcriptional regulatory protein Smed_2641.